A 281-amino-acid chain; its full sequence is Pantothenate synthetase (281 aa).

M30–H37 provides a ligand contact to ATP. The active-site Proton donor is H37. Q61 contacts (R)-pantoate. Beta-alanine is bound at residue Q61. G149 to D152 contributes to the ATP binding site. Residue Q155 coordinates (R)-pantoate. Residues I178 and M186–R189 contribute to the ATP site.

The protein belongs to the pantothenate synthetase family. In terms of assembly, homodimer.

Its subcellular location is the cytoplasm. It carries out the reaction (R)-pantoate + beta-alanine + ATP = (R)-pantothenate + AMP + diphosphate + H(+). It functions in the pathway cofactor biosynthesis; (R)-pantothenate biosynthesis; (R)-pantothenate from (R)-pantoate and beta-alanine: step 1/1. Functionally, catalyzes the condensation of pantoate with beta-alanine in an ATP-dependent reaction via a pantoyl-adenylate intermediate. The polypeptide is Pantothenate synthetase (Shewanella baltica (strain OS195)).